A 428-amino-acid polypeptide reads, in one-letter code: Adenylosuccinate synthetase (428 aa).

Residues 12–18 (GDEGKGK) and 40–42 (GHT) each bind GTP. Asp13 acts as the Proton acceptor in catalysis. The Mg(2+) site is built by Asp13 and Gly40. IMP-binding positions include 13 to 16 (DEGK), 38 to 41 (NAGH), Thr128, Arg142, Gln223, Thr238, and Arg302. His41 functions as the Proton donor in the catalytic mechanism. 298-304 (VTTGRPR) serves as a coordination point for substrate. Residues Arg304, 330-332 (KLD), and 413-415 (GVG) contribute to the GTP site.

Belongs to the adenylosuccinate synthetase family. As to quaternary structure, homodimer. The cofactor is Mg(2+).

Its subcellular location is the cytoplasm. The enzyme catalyses IMP + L-aspartate + GTP = N(6)-(1,2-dicarboxyethyl)-AMP + GDP + phosphate + 2 H(+). It functions in the pathway purine metabolism; AMP biosynthesis via de novo pathway; AMP from IMP: step 1/2. Plays an important role in the de novo pathway of purine nucleotide biosynthesis. Catalyzes the first committed step in the biosynthesis of AMP from IMP. The polypeptide is Adenylosuccinate synthetase (Acidothermus cellulolyticus (strain ATCC 43068 / DSM 8971 / 11B)).